We begin with the raw amino-acid sequence, 143 residues long: MNKTYLAPTKNYSTWYIIDAKNKNLGRLSSKIAKLLRGKNSISFTPYVNNKIYIILINSRSINVTGKKFVQKTYKRHSGYPGGLKVQKFNEILNQRPNRILEKSIKGMLPKGILGRQLFRQLKIYPDNIHPHESQQPKIITFI.

This sequence belongs to the universal ribosomal protein uL13 family. As to quaternary structure, part of the 50S ribosomal subunit.

The protein localises to the plastid. It localises to the chloroplast. This chain is Large ribosomal subunit protein uL13c, found in Gracilaria tenuistipitata var. liui (Red alga).